A 636-amino-acid polypeptide reads, in one-letter code: DNA-directed RNA polymerase subunit beta' (636 aa).

Zn(2+)-binding residues include Cys70, Cys72, Cys85, and Cys88. The Mg(2+) site is built by Asp471, Asp473, and Asp475.

Belongs to the RNA polymerase beta' chain family. RpoC1 subfamily. It depends on Mg(2+) as a cofactor. The cofactor is Zn(2+).

It localises to the plastid. The protein resides in the cyanelle. It carries out the reaction RNA(n) + a ribonucleoside 5'-triphosphate = RNA(n+1) + diphosphate. Its function is as follows. DNA-dependent RNA polymerase catalyzes the transcription of DNA into RNA using the four ribonucleoside triphosphates as substrates. The protein is DNA-directed RNA polymerase subunit beta' of Cyanophora paradoxa.